Here is a 604-residue protein sequence, read N- to C-terminus: MLARALLLCAAVALSHAANPCCSNPCQNRGVCMTMGFDQYKCDCTRTGFYGENCSTPEFLTRIKLLLKPTPDTVHYILTHFKGVWNIVNSIPFLRNSIMKYVLTSRSHMIDSPPTYNVHYNYKSWEAFSNLSYYTRALPPVADDCPTPMGVKGKKELPDSKDVVEKLLLRRKFIPDPQGTNMMFAFFAQHFTHQFFKTDLKRGPAFTKGLGHGVDLNHIYGETLDRQHKLRLFKDGKMKYQVIDGEVYPPTVKDTQVEMIYPPHIPAHLQFAVGQEVFGLVPGLMMYATIWLREHNRVCDVLKQEHPEWDDEQLFQTSRLILIGETIKIVIEDYVQHLSGYHFKLKFDPELLFNQQFQYQNRIAAEFNTLYHWHPLLPDTFQIDDQQYNYQQFLYNNSILLEHGLTQFVESFTRQIAGRVAGGRNVPPAVQKVAKASIDQSRQMKYQSLNEYRKRFLLKPYESFEELTGEKEMAAELEALYGDIDAVELYPALLVERPRPDAIFGESMVEMGAPFSLKGLMGNPICSPNYWKPSTFGGEVGFKIVNTASIQSLICNNVKGCPFTSFNVPDPQLTKTVTINASASHSRLEDINPTVLLKGRSTEL.

The N-terminal stretch at 1–17 is a signal peptide; that stretch reads MLARALLLCAAVALSHA. An EGF-like domain is found at 18–55; the sequence is ANPCCSNPCQNRGVCMTMGFDQYKCDCTRTGFYGENCS. 4 disulfide bridges follow: cysteine 21/cysteine 32, cysteine 22/cysteine 145, cysteine 26/cysteine 42, and cysteine 44/cysteine 54. Asparagine 53 carries N-linked (GlcNAc...) asparagine glycosylation. Arginine 106 provides a ligand contact to substrate. Residue asparagine 130 is glycosylated (N-linked (GlcNAc...) asparagine). The active-site Proton acceptor is histidine 193. A substrate-binding site is contributed by tyrosine 341. Tyrosine 371 (for cyclooxygenase activity) is an active-site residue. Heme b is bound at residue histidine 374. Asparagine 396 carries N-linked (GlcNAc...) asparagine glycosylation. Position 526 is an S-nitrosocysteine (cysteine 526). Cysteines 555 and 561 form a disulfide. Position 565 is an O-acetylserine (serine 565). Asparagine 580 carries an N-linked (GlcNAc...) asparagine glycan.

This sequence belongs to the prostaglandin G/H synthase family. As to quaternary structure, homodimer. It depends on heme b as a cofactor. In terms of processing, S-nitrosylation by NOS2 (iNOS) activates enzyme activity. S-nitrosylation may take place on different Cys residues in addition to Cys-526. Acetylated at Ser-565 by SPHK1. During neuroinflammation, acetylation by SPHK1 promotes neuronal secretion of specialized preresolving mediators (SPMs), especially 15-R-lipoxin A4, which results in an increase of phagocytic microglia. As to expression, highest expression in kidney and urinary bladder.

Its subcellular location is the microsome membrane. The protein resides in the endoplasmic reticulum membrane. The protein localises to the nucleus inner membrane. It localises to the nucleus outer membrane. It carries out the reaction (5Z,8Z,11Z,14Z)-eicosatetraenoate + AH2 + 2 O2 = prostaglandin H2 + A + H2O. The catalysed reaction is (5Z,8Z,11Z,14Z)-eicosatetraenoate + 2 O2 = prostaglandin G2. The enzyme catalyses prostaglandin G2 + AH2 = prostaglandin H2 + A + H2O. It catalyses the reaction (5Z,8Z,11Z,14Z,17Z)-eicosapentaenoate + 2 O2 = prostaglandin G3. It carries out the reaction prostaglandin G3 + AH2 = prostaglandin H3 + A + H2O. The catalysed reaction is (8Z,11Z,14Z)-eicosatrienoate + 2 O2 = prostaglandin G1. The enzyme catalyses prostaglandin G1 + AH2 = prostaglandin H1 + A + H2O. It catalyses the reaction 2-(5Z,8Z,11Z,14Z)-eicosatetraenoyl-sn-glycero-3-phosphoethanolamine + 2 O2 = 2-(prostaglandin G2)-sn-glycero-3-phosphoethanolamine. It carries out the reaction 2-(prostaglandin G2)-sn-glycero-3-phosphoethanolamine + AH2 = 2-(prostaglandin H2)-sn-glycero-3-phosphoethanolamine + A + H2O. The catalysed reaction is 2-(5Z,8Z,11Z,14Z)-eicosatetraenoyl-sn-glycero-3-phosphocholine + 2 O2 = 2-(prostaglandin G2)-sn-glycero-3-phosphocholine. The enzyme catalyses 2-(prostaglandin G2)-sn-glycero-3-phosphocholine + AH2 = 2-(prostaglandin H2)-sn-glycero-3-phosphocholine + A + H2O. It catalyses the reaction (15S)-hydroperoxy-(5Z,8Z,11Z,13E)-eicosatetraenoate + AH2 = (15S)-hydroxy-(5Z,8Z,11Z,13E)-eicosatetraenoate + A + H2O. It carries out the reaction 2-(5Z,8Z,11Z,14Z)-eicosatetraenoyl-sn-glycero-3-phosphocholine + AH2 + O2 = 2-[(15S)-hydroxy-(5Z,8Z,11Z,13E)-eicosatetraenoyl]-sn-glycero-3-phosphocholine + A + H2O. The catalysed reaction is 2-(5Z,8Z,11Z,14Z)-eicosatetraenoyl-sn-glycero-3-phosphocholine + AH2 + O2 = 2-[(15R)-hydroxy-(5Z,8Z,11Z,13E)-eicosatetraenoyl]-sn-glycero-3-phosphocholine + A + H2O. The enzyme catalyses 2-(5Z,8Z,11Z,14Z)-eicosatetraenoyl-sn-glycero-3-phosphocholine + AH2 + O2 = 2-[(11R)-hydroxy-(5Z,8Z,12E,14Z)-eicosatetraenoyl]-sn-glycero-3-phosphocholine + A + H2O. It catalyses the reaction (9Z,12Z)-octadecadienoate + AH2 + O2 = 9-hydroxy-(10E,12Z)-octadecadienoate + A + H2O. It carries out the reaction (9Z,12Z)-octadecadienoate + AH2 + O2 = 13-hydroxy-(9Z,11E)-octadecadienoate + A + H2O. The catalysed reaction is (5Z,8Z,11Z,14Z)-eicosatetraenoate + AH2 + O2 = (15R)-hydroxy-(5Z,8Z,11Z,13E)-eicosatetraenoate + A + H2O. The enzyme catalyses (5Z,8Z,11Z,14Z)-eicosatetraenoate + AH2 + O2 = (11R)-hydroxy-(5Z,8Z,12E,14Z)-eicosatetraenoate + A + H2O. It catalyses the reaction (5Z,8Z,11Z,14Z,17Z)-eicosapentaenoate + AH2 + O2 = (11R)-hydroxy-(5Z,8Z,12E,14Z,17Z)-eicosapentaenoate + A + H2O. It carries out the reaction (5Z,8Z,11Z,14Z,17Z)-eicosapentaenoate + AH2 + O2 = (18S)-hydroxy-(5Z,8Z,11Z,14Z,16E)-eicosapentaenoate + A + H2O. The catalysed reaction is (5Z,8Z,11Z,14Z,17Z)-eicosapentaenoate + AH2 + O2 = (18R)-hydroxy-(5Z,8Z,11Z,14Z,16E)-eicosapentaenoate + A + H2O. The enzyme catalyses (5Z,8Z,11Z,14Z,17Z)-eicosapentaenoate + AH2 + O2 = (15R)-hydroxy-(5Z,8Z,11Z,13E,17Z)-eicosapentaenoate + A + H2O. It catalyses the reaction (5Z,8Z,11Z,14Z,17Z)-eicosapentaenoate + AH2 + O2 = (15S)-hydroxy-(5Z,8Z,11Z,13E,17Z)-eicosapentaenoate + A + H2O. It carries out the reaction (7Z,10Z,13Z,16Z,19Z)-docosapentaenoate + AH2 + O2 = 13R-hydroxy-(7Z,10Z,14E,16Z,19Z)-docosapentaenoate + A + H2O. The catalysed reaction is (4Z,7Z,10Z,13Z,16Z,19Z)-docosahexaenoate + AH2 + O2 = 13-hydroxy-(4Z,7Z,10Z,14E,16Z,19Z)-docosahexaenoate + A + H2O. The enzyme catalyses (5S)-hydroxy-(6E,8Z,11Z,14Z)-eicosatetraenoate + AH2 + O2 = (5S,15R)-dihydroxy-(6E,8Z,11Z,13E)-eicosatetraenoate + A + H2O. It catalyses the reaction (4Z,7Z,10Z,13Z,16Z,19Z)-docosahexaenoate + AH2 + O2 = 17R-hydroxy-(4Z,7Z,10Z,13Z,15E,19Z)-docosahexaenoate + A + H2O. It carries out the reaction (5S)-hydroxy-(6E,8Z,11Z,14Z)-eicosatetraenoate + AH2 + O2 = (5S,15S)-dihydroxy-(6E,8Z,11Z,13E)-eicosatetraenoate + A + H2O. The catalysed reaction is (5S)-hydroxy-(6E,8Z,11Z,14Z)-eicosatetraenoate + AH2 + O2 = (5S,11R)-dihydroxy-(6E,8Z,12E,14Z)-eicosatetraenoate + A + H2O. The enzyme catalyses 2-(5Z,8Z,11Z,14Z-eicosatetraenoyl)-glycerol + 2 O2 = 2-glyceryl-prostaglandin G2. It catalyses the reaction 2-glyceryl-prostaglandin G2 + AH2 = 2-glyceryl-prostaglandin H2 + A + H2O. It carries out the reaction (5Z,8Z,11Z,14Z)-eicosatetraenoate + O2 = (15R)-hydroperoxy-(5Z,8Z,11Z,13E)-eicosatetraenoate. The catalysed reaction is (5Z,8Z,11Z,14Z)-eicosatetraenoate + O2 = 11R-hydroperoxy-(5Z,8Z,12E,14Z)-eicosatetraenoate. The enzyme catalyses (9Z,12Z)-octadecadienoate + AH2 + O2 = (9R)-hydroxy-(10E,12Z)-octadecadienoate + A + H2O. It catalyses the reaction (9Z,12Z)-octadecadienoate + AH2 + O2 = (9S)-hydroxy-(10E,12Z)-octadecadienoate + A + H2O. It carries out the reaction (9Z,12Z)-octadecadienoate + AH2 + O2 = (13S)-hydroxy-(9Z,11E)-octadecadienoate + A + H2O. The catalysed reaction is (9Z,12Z)-octadecadienoate + AH2 + O2 = (13R)-hydroxy-(9Z,11E)-octadecadienoate + A + H2O. It functions in the pathway lipid metabolism; prostaglandin biosynthesis. Dual cyclooxygenase and peroxidase in the biosynthesis pathway of prostanoids, a class of C20 oxylipins mainly derived from arachidonate ((5Z,8Z,11Z,14Z)-eicosatetraenoate, AA, C20:4(n-6)), with a particular role in the inflammatory response. The cyclooxygenase activity oxygenates AA to the hydroperoxy endoperoxide prostaglandin G2 (PGG2), and the peroxidase activity reduces PGG2 to the hydroxy endoperoxide prostaglandin H2 (PGH2), the precursor of all 2-series prostaglandins and thromboxanes. This complex transformation is initiated by abstraction of hydrogen at carbon 13 (with S-stereochemistry), followed by insertion of molecular O2 to form the endoperoxide bridge between carbon 9 and 11 that defines prostaglandins. The insertion of a second molecule of O2 (bis-oxygenase activity) yields a hydroperoxy group in PGG2 that is then reduced to PGH2 by two electrons. Similarly catalyzes successive cyclooxygenation and peroxidation of dihomo-gamma-linoleate (DGLA, C20:3(n-6)) and eicosapentaenoate (EPA, C20:5(n-3)) to corresponding PGH1 and PGH3, the precursors of 1- and 3-series prostaglandins. In an alternative pathway of prostanoid biosynthesis, converts 2-arachidonoyl lysophopholipids to prostanoid lysophopholipids, which are then hydrolyzed by intracellular phospholipases to release free prostanoids. Metabolizes 2-arachidonoyl glycerol yielding the glyceryl ester of PGH2, a process that can contribute to pain response. Generates lipid mediators from n-3 and n-6 polyunsaturated fatty acids (PUFAs) via a lipoxygenase-type mechanism. Oxygenates PUFAs to hydroperoxy compounds and then reduces them to corresponding alcohols. Plays a role in the generation of resolution phase interaction products (resolvins) during both sterile and infectious inflammation. Metabolizes docosahexaenoate (DHA, C22:6(n-3)) to 17R-HDHA, a precursor of the D-series resolvins (RvDs). As a component of the biosynthetic pathway of E-series resolvins (RvEs), converts eicosapentaenoate (EPA, C20:5(n-3)) primarily to 18S-HEPE that is further metabolized by ALOX5 and LTA4H to generate 18S-RvE1 and 18S-RvE2. In vascular endothelial cells, converts docosapentaenoate (DPA, C22:5(n-3)) to 13R-HDPA, a precursor for 13-series resolvins (RvTs) shown to activate macrophage phagocytosis during bacterial infection. In activated leukocytes, contributes to oxygenation of hydroxyeicosatetraenoates (HETE) to diHETES (5,15-diHETE and 5,11-diHETE). Can also use linoleate (LA, (9Z,12Z)-octadecadienoate, C18:2(n-6)) as substrate and produce hydroxyoctadecadienoates (HODEs) in a regio- and stereospecific manner,being (9R)-HODE ((9R)-hydroxy-(10E,12Z)-octadecadienoate) and (13S)-HODE ((13S)-hydroxy-(9Z,11E)-octadecadienoate) its major products. During neuroinflammation, plays a role in neuronal secretion of specialized preresolving mediators (SPMs) 15R-lipoxin A4 that regulates phagocytic microglia. The sequence is that of Prostaglandin G/H synthase 2 (PTGS2) from Oryctolagus cuniculus (Rabbit).